The chain runs to 224 residues: MLLQIDRVLTTEELNQLNTLLQAGVFEDGKWTAGIYAKTVKDNQQLVQEGEEYRVASEIVLSALSRNQLFQAYVQPKIIGPLLFSRYEVGMAYGTHTDNALMGSGDQLRRSDVSLTIFLNDPFAYEGGALVLDTSLGEQYFKLPAGSMIVYPSIFLHRVETVSKGVRLVAVAWVQSLIRDPLERELLFELDTVRRSLFEKQGKTVDFDLLCKVYSNLLRKWAEI.

In terms of domain architecture, Fe2OG dioxygenase spans 77-176 (KIIGPLLFSR…RLVAVAWVQS (100 aa)). Positions 96, 98, and 157 each coordinate Fe cation. R167 is a 2-oxoglutarate binding site.

Fe(2+) serves as cofactor. Requires L-ascorbate as cofactor.

The polypeptide is PKHD-type hydroxylase tll1907 (Thermosynechococcus vestitus (strain NIES-2133 / IAM M-273 / BP-1)).